A 297-amino-acid chain; its full sequence is Probable endonuclease 4 (297 aa).

Histidine 69, histidine 110, glutamate 145, aspartate 179, histidine 182, histidine 214, aspartate 227, histidine 229, and glutamate 259 together coordinate Zn(2+).

The protein belongs to the AP endonuclease 2 family. The cofactor is Zn(2+).

It carries out the reaction Endonucleolytic cleavage to 5'-phosphooligonucleotide end-products.. Its function is as follows. Endonuclease IV plays a role in DNA repair. It cleaves phosphodiester bonds at apurinic or apyrimidinic (AP) sites, generating a 3'-hydroxyl group and a 5'-terminal sugar phosphate. In Listeria welshimeri serovar 6b (strain ATCC 35897 / DSM 20650 / CCUG 15529 / CIP 8149 / NCTC 11857 / SLCC 5334 / V8), this protein is Probable endonuclease 4.